The chain runs to 381 residues: MSSRIARALALVVTLLHLTRLALSTCPAACHCPLEAPKCAPGVGLVRDGCGCCKVCAKQLNEDCSKTQPCDHTKGLECNFGASSTALKGICRAQSEGRPCEYNSRIYQNGESFQPNCKHQCTCIDGAVGCIPLCPQELSLPNLGCPNPRLVKVTGQCCEEWVCDEDSIKDPMEDQDGLLGKELGFDASEVELTRNNELIAVGKGSSLKRLPVFGMEPRILYNPLQGQKCIVQTTSWSQCSKTCGTGISTRVTNDNPECRLVKETRICEVRPCGQPVYSSLKKGKKCSKTKKSPEPVRFTYAGCLSVKKYRPKYCGSCVDGRCCTPQLTRTVKMRFRCEDGETFSKNVMMIQSCKCNYNCPHANEAAFPFYRLFNDIHKFRD.

Positions 1–24 are cleaved as a signal peptide; that stretch reads MSSRIARALALVVTLLHLTRLALS. An IGFBP N-terminal domain is found at 25–94; that stretch reads TCPAACHCPL…TALKGICRAQ (70 aa). 6 disulfide bridges follow: Cys26/Cys50, Cys30/Cys52, Cys32/Cys53, Cys39/Cys56, Cys64/Cys78, and Cys70/Cys91. A VWFC domain is found at 98 to 164; it reads RPCEYNSRIY…GQCCEEWVCD (67 aa). Ser188 bears the Phosphoserine; by FAM20C mark. Residues 228–273 enclose the TSP type-1 domain; it reads KCIVQTTSWSQCSKTCGTGISTRVTNDNPECRLVKETRICEVRPCG. A heparin-binding region spans residues 279-315; sequence SLKKGKKCSKTKKSPEPVRFTYAGCLSVKKYRPKYCG. 5 disulfides stabilise this stretch: Cys286–Cys323, Cys303–Cys337, Cys314–Cys353, Cys317–Cys355, and Cys322–Cys359. The CTCK domain maps to 286 to 360; it reads CSKTKKSPEP…QSCKCNYNCP (75 aa).

It belongs to the CCN family. Interaction with integrins is heparin- and cell-type-dependent and promotes cell adhesion. In skin fibroblasts it binds ITGA6/ITGB1, in endothelial cells, binds ITGAV/ITGB3 and in platelets, ITGA2B/ITGB3. Binds, in vitro, ITGAV/ITGB5.

The protein localises to the secreted. In terms of biological role, promotes cell proliferation, chemotaxis, angiogenesis and cell adhesion. Appears to play a role in wound healing by up-regulating, in skin fibroblasts, the expression of a number of genes involved in angiogenesis, inflammation and matrix remodeling including VEGA-A, VEGA-C, MMP1, MMP3, TIMP1, uPA, PAI-1 and integrins alpha-3 and alpha-5. CCN1-mediated gene regulation is dependent on heparin-binding. Down-regulates the expression of alpha-1 and alpha-2 subunits of collagen type-1. Promotes cell adhesion and adhesive signaling through integrin alpha-6/beta-1, cell migration through integrin alpha-v/beta-5 and cell proliferation through integrin alpha-v/beta-3. The polypeptide is CCN family member 1 (Homo sapiens (Human)).